We begin with the raw amino-acid sequence, 466 residues long: MSATQDYIVADIGLADFGRKEIAIAETEMPGLMACREEFGASKPLKGARITGSLHMTIQTAVLIETLVALGAEVRWASCNIFSTQDHAAAAIAASGVPVFAVKGETLEEYWTYTDKIFQWADGGVSNMILDDGGDATMYILLGARAEAGENILTNPGSEEEEILFAQIKKRLAATPGWFTRQRDAIKGVTEETTTGVNRLYQLQAKGLLPFPAINVNDSVTKSKFDNKYGCKESLVDGIRRGTDVMMAGKVAVVCGYGDVGKGSAASLSGAGARVKVTEVDPICALQAAMDGYEVVQLEDVVSSADIFITTTGNKDVIRIEHMRAMKDMAIVGNIGHFDNEIQVSALRNLKWTNVKPQVDLIEFPKGNRIILLSEGRLLNLGNATGHPSFVMSASFSNQVLAQIELFTKGEQYKNEVYVLPKQLDEKVARLHLAKLGAKLTELSEEQASYIGVKQQGPFKAEHYRY.

Substrate contacts are provided by Thr57, Asp132, and Glu192. 193–195 (TTT) is a binding site for NAD(+). The substrate site is built by Lys222 and Asp226. NAD(+) is bound by residues Asn227, 256–261 (GYGDVG), Glu279, Asn314, 335–337 (IGH), and Asn380.

Belongs to the adenosylhomocysteinase family. The cofactor is NAD(+).

The protein localises to the cytoplasm. It carries out the reaction S-adenosyl-L-homocysteine + H2O = L-homocysteine + adenosine. It functions in the pathway amino-acid biosynthesis; L-homocysteine biosynthesis; L-homocysteine from S-adenosyl-L-homocysteine: step 1/1. In terms of biological role, may play a key role in the regulation of the intracellular concentration of adenosylhomocysteine. In Rhizobium meliloti (strain 1021) (Ensifer meliloti), this protein is Adenosylhomocysteinase.